A 360-amino-acid polypeptide reads, in one-letter code: Photosystem II protein D1 (360 aa).

The next 3 helical transmembrane spans lie at 29–46 (YIGWFGVLMIPTLLTATS), 118–133 (HFLLGVASYMGREWEL), and 142–156 (WIFVAFSAPVAAASA). His-118 is a chlorophyll a binding site. Tyr-126 contacts pheophytin a. Residues Asp-170 and Glu-189 each coordinate [CaMn4O5] cluster. A helical membrane pass occupies residues 197–218 (FHMAGVAGVFGGSLFSAMHGSL). His-198 serves as a coordination point for chlorophyll a. A quinone is bound by residues His-215 and 264-265 (SF). Residue His-215 coordinates Fe cation. Residue His-272 coordinates Fe cation. A helical transmembrane segment spans residues 274 to 288 (FLAAWPVVGIWLTAL). His-332, Glu-333, Asp-342, and Ala-344 together coordinate [CaMn4O5] cluster. Positions 345-360 (SNEVLPVAVNAPAVNG) are excised as a propeptide.

This sequence belongs to the reaction center PufL/M/PsbA/D family. PSII is composed of 1 copy each of membrane proteins PsbA, PsbB, PsbC, PsbD, PsbE, PsbF, PsbH, PsbI, PsbJ, PsbK, PsbL, PsbM, PsbT, PsbX, PsbY, PsbZ, Psb30/Ycf12, at least 3 peripheral proteins of the oxygen-evolving complex and a large number of cofactors. It forms dimeric complexes. Requires The D1/D2 heterodimer binds P680, chlorophylls that are the primary electron donor of PSII, and subsequent electron acceptors. It shares a non-heme iron and each subunit binds pheophytin, quinone, additional chlorophylls, carotenoids and lipids. D1 provides most of the ligands for the Mn4-Ca-O5 cluster of the oxygen-evolving complex (OEC). There is also a Cl(-1) ion associated with D1 and D2, which is required for oxygen evolution. The PSII complex binds additional chlorophylls, carotenoids and specific lipids. as cofactor. Post-translationally, tyr-161 forms a radical intermediate that is referred to as redox-active TyrZ, YZ or Y-Z. In terms of processing, C-terminally processed by CTPA; processing is essential to allow assembly of the oxygen-evolving complex and thus photosynthetic growth.

The protein resides in the plastid. Its subcellular location is the chloroplast thylakoid membrane. The catalysed reaction is 2 a plastoquinone + 4 hnu + 2 H2O = 2 a plastoquinol + O2. In terms of biological role, photosystem II (PSII) is a light-driven water:plastoquinone oxidoreductase that uses light energy to abstract electrons from H(2)O, generating O(2) and a proton gradient subsequently used for ATP formation. It consists of a core antenna complex that captures photons, and an electron transfer chain that converts photonic excitation into a charge separation. The D1/D2 (PsbA/PsbD) reaction center heterodimer binds P680, the primary electron donor of PSII as well as several subsequent electron acceptors. This Heterosigma akashiwo (Chromophytic alga) protein is Photosystem II protein D1.